The primary structure comprises 155 residues: 3-dehydroquinate dehydratase 1 (155 aa).

Tyr28 (proton acceptor) is an active-site residue. Residues Asn80, His86, and Asp93 each coordinate substrate. The active-site Proton donor is His106. Residues 107 to 108 and Arg117 each bind substrate; that span reads VT.

It belongs to the type-II 3-dehydroquinase family. As to quaternary structure, homododecamer.

It catalyses the reaction 3-dehydroquinate = 3-dehydroshikimate + H2O. The protein operates within metabolic intermediate biosynthesis; chorismate biosynthesis; chorismate from D-erythrose 4-phosphate and phosphoenolpyruvate: step 3/7. Functionally, catalyzes a trans-dehydration via an enolate intermediate. The protein is 3-dehydroquinate dehydratase 1 (aroQ1) of Bradyrhizobium diazoefficiens (strain JCM 10833 / BCRC 13528 / IAM 13628 / NBRC 14792 / USDA 110).